Here is a 737-residue protein sequence, read N- to C-terminus: Cilium assembly protein DZIP1L (737 aa).

The interaction with Rab8 stretch occupies residues methionine 1–glutamine 293. A coiled-coil region spans residues valine 98 to arginine 132. Residues tyrosine 144–histidine 167 form a C2H2-type zinc finger. Disordered regions lie at residues histidine 167–lysine 187, glutamate 214–leucine 267, serine 415–alanine 548, lysine 624–aspartate 682, and isoleucine 698–lysine 737. Basic and acidic residues-rich tracts occupy residues glutamate 244–glutamine 266 and serine 415–glutamate 438. Residues serine 457–lysine 469 show a composition bias toward polar residues. Positions serine 492–threonine 510 are enriched in acidic residues. The segment covering serine 665–arginine 677 has biased composition (polar residues). The span at glutamate 724 to lysine 737 shows a compositional bias: basic and acidic residues.

The protein belongs to the DZIP C2H2-type zinc-finger protein family. Component of a ciliary transition zone (TZ)-localized complex composed of DZIP1, Fam92 and Cby. Interacts directly with Cby. Interacts with Cep290 (via N-terminus). Interacts (via N-terminus) with Rab8. In terms of tissue distribution, in neurons of the second and third antennal segments, expressed at the tip of the dendrites.

The protein resides in the cytoplasm. Its subcellular location is the cytoskeleton. It localises to the microtubule organizing center. The protein localises to the centrosome. It is found in the centriole. The protein resides in the cilium basal body. Functionally, component of the DZIP1-Fam92-Cby complex which promotes ciliogenesis in sensory neurons and spermatocytes by acting downstream of Cep290 to initiate early ciliary membrane formation and thus transition zone (TZ) assembly. During spermatogenesis, also regulates distal elongation of the basal-body and their docking (anchoring) to the plasma membrane and as a consequence, regulates the initiation and proper elongation of axonemal microtubules. Within the complex, required to recruit or stabilize Rab8, Fam92 and Cby at the distal basal body of cilia to promote early ciliary membrane formation and initiate TZ assembly. Also acts with Fam92 to restrict Cep290 localization to the proximal part of the TZ. May also be involved in recruitment or stabilization of Mks1 at the TZ. This chain is Cilium assembly protein DZIP1L, found in Drosophila melanogaster (Fruit fly).